The primary structure comprises 62 residues: MIIAIQLLVLLLIALSTVLVVGVPVVLASPGQWEQSKGLIYTGAGLWTGLVIVTSLVNSLVV.

A run of 2 helical transmembrane segments spans residues 8–28 and 41–61; these read LVLL…VVLA and YTGA…NSLV.

It belongs to the PsbZ family. In terms of assembly, PSII is composed of 1 copy each of membrane proteins PsbA, PsbB, PsbC, PsbD, PsbE, PsbF, PsbH, PsbI, PsbJ, PsbK, PsbL, PsbM, PsbT, PsbX, PsbY, PsbZ, Psb30/Ycf12, at least 3 peripheral proteins of the oxygen-evolving complex and a large number of cofactors. It forms dimeric complexes.

The protein resides in the plastid. It is found in the chloroplast thylakoid membrane. Functionally, may control the interaction of photosystem II (PSII) cores with the light-harvesting antenna, regulates electron flow through the 2 photosystem reaction centers. PSII is a light-driven water plastoquinone oxidoreductase, using light energy to abstract electrons from H(2)O, generating a proton gradient subsequently used for ATP formation. In Pyropia yezoensis (Susabi-nori), this protein is Photosystem II reaction center protein Z.